A 500-amino-acid chain; its full sequence is Glycerol kinase (500 aa).

Thr-12 is an ADP binding site. ATP is bound by residues Thr-12, Thr-13, and Ser-14. Position 12 (Thr-12) interacts with sn-glycerol 3-phosphate. Position 16 (Arg-16) interacts with ADP. Residues Arg-82, Glu-83, Tyr-134, and Asp-244 each coordinate sn-glycerol 3-phosphate. Residues Arg-82, Glu-83, Tyr-134, Asp-244, and Gln-245 each contribute to the glycerol site. ADP is bound by residues Thr-266 and Gly-309. Residues Thr-266, Gly-309, Gln-313, and Gly-410 each coordinate ATP. The ADP site is built by Gly-410 and Asn-414.

The protein belongs to the FGGY kinase family. As to quaternary structure, homotetramer and homodimer (in equilibrium).

It carries out the reaction glycerol + ATP = sn-glycerol 3-phosphate + ADP + H(+). It participates in polyol metabolism; glycerol degradation via glycerol kinase pathway; sn-glycerol 3-phosphate from glycerol: step 1/1. Its activity is regulated as follows. Activated by phosphorylation and inhibited by fructose 1,6-bisphosphate (FBP). Key enzyme in the regulation of glycerol uptake and metabolism. Catalyzes the phosphorylation of glycerol to yield sn-glycerol 3-phosphate. The polypeptide is Glycerol kinase (Alkaliphilus metalliredigens (strain QYMF)).